Consider the following 874-residue polypeptide: Alanine--tRNA ligase (874 aa).

Zn(2+) contacts are provided by H564, H568, C665, and H669.

Belongs to the class-II aminoacyl-tRNA synthetase family. Requires Zn(2+) as cofactor.

Its subcellular location is the cytoplasm. It catalyses the reaction tRNA(Ala) + L-alanine + ATP = L-alanyl-tRNA(Ala) + AMP + diphosphate. Catalyzes the attachment of alanine to tRNA(Ala) in a two-step reaction: alanine is first activated by ATP to form Ala-AMP and then transferred to the acceptor end of tRNA(Ala). Also edits incorrectly charged Ser-tRNA(Ala) and Gly-tRNA(Ala) via its editing domain. The chain is Alanine--tRNA ligase from Burkholderia thailandensis (strain ATCC 700388 / DSM 13276 / CCUG 48851 / CIP 106301 / E264).